The chain runs to 151 residues: Arginine repressor (151 aa).

Belongs to the ArgR family.

Its subcellular location is the cytoplasm. The protein operates within amino-acid biosynthesis; L-arginine biosynthesis [regulation]. Its function is as follows. Regulates arginine biosynthesis genes. The chain is Arginine repressor from Pelotomaculum thermopropionicum (strain DSM 13744 / JCM 10971 / SI).